Reading from the N-terminus, the 240-residue chain is Small ribosomal subunit protein uS3m (240 aa).

Belongs to the universal ribosomal protein uS3 family.

It localises to the mitochondrion. This Chondrus crispus (Carrageen Irish moss) protein is Small ribosomal subunit protein uS3m (RPS3).